A 323-amino-acid polypeptide reads, in one-letter code: Phosphopantothenate--cysteine ligase 2 (323 aa).

Belongs to the PPC synthetase family. In terms of assembly, homodimer.

It catalyses the reaction (R)-4'-phosphopantothenate + L-cysteine + CTP = N-[(R)-4-phosphopantothenoyl]-L-cysteine + CMP + diphosphate + H(+). The protein operates within cofactor biosynthesis; coenzyme A biosynthesis; CoA from (R)-pantothenate: step 2/5. Catalyzes the first step in the biosynthesis of coenzyme A from vitamin B5, where cysteine is conjugated to 4'-phosphopantothenate to form 4-phosphopantothenoylcysteine. The chain is Phosphopantothenate--cysteine ligase 2 from Oryza sativa subsp. japonica (Rice).